The following is a 164-amino-acid chain: Interferon gamma (164 aa).

An N-terminal signal peptide occupies residues 1 to 19 (MTCQTYNLFVLSVIMIYYG). 2 N-linked (GlcNAc...) asparagine glycosylation sites follow: asparagine 42 and asparagine 61.

The protein belongs to the type II (or gamma) interferon family. Homodimer.

It localises to the secreted. Its function is as follows. Produced by lymphocytes activated by specific antigens or mitogens. IFN-gamma, in addition to having antiviral activity, has important immunoregulatory functions. It is a potent activator of macrophages, it has antiproliferative effects on transformed cells and it can potentiate the antiviral and antitumor effects of the type I interferons. The polypeptide is Interferon gamma (IFNG) (Numida meleagris (Helmeted guineafowl)).